Reading from the N-terminus, the 540-residue chain is PTS system alpha-glucoside-specific EIICB component (540 aa).

The region spanning 1–420 (MLSQIQRFGG…LNLKTPGREE (420 aa)) is the PTS EIIC type-1 domain. 11 helical membrane-spanning segments follow: residues 12–32 (MFTP…AIML), 87–107 (ACLA…AMGM), 130–150 (IAGI…SGLV), 174–194 (FVVI…LLGW), 201–221 (IESL…VYIF), 225–245 (ILIP…GPAV), 277–297 (FALH…ALYF), 307–327 (VAGL…TEPL), 329–349 (FTFL…AATM), 352–372 (VMYI…QFLP), and 384–404 (SMMF…FVVF). In terms of domain architecture, PTS EIIB type-1 spans 448–530 (LGQAAGFLQA…ENLMKDSLST (83 aa)). Cysteine 470 (phosphocysteine intermediate; for EIIB activity) is an active-site residue.

Its subcellular location is the cell membrane. In terms of biological role, the phosphoenolpyruvate-dependent sugar phosphotransferase system (sugar PTS), a major carbohydrate active -transport system, catalyzes the phosphorylation of incoming sugar substrates concomitantly with their translocation across the cell membrane. This system is involved in alpha-glucoside transport. Involved in the transport and simultaneous phosphorylation at O-6 of the glucosyl moiety of sucrose and its five linkage-isomeric alpha-D-glucosyl-D-fructoses. Can also transport maltose, isomaltose and maltitol, phosphorylating at O-6 of their non-reducing glucose portion. The chain is PTS system alpha-glucoside-specific EIICB component (aglA) from Klebsiella pneumoniae.